Here is a 288-residue protein sequence, read N- to C-terminus: Polyamine aminopropyltransferase (288 aa).

In terms of domain architecture, PABS spans 9–238; it reads ETLHDQFGQY…GIMTFAWATD (230 aa). An S-methyl-5'-thioadenosine-binding site is contributed by glutamine 33. Spermidine contacts are provided by histidine 64 and aspartate 88. Residues glutamate 108 and 140-141 contribute to the S-methyl-5'-thioadenosine site; that span reads DG. Aspartate 158 serves as the catalytic Proton acceptor. 158–161 serves as a coordination point for spermidine; the sequence is DCTD. Proline 165 serves as a coordination point for S-methyl-5'-thioadenosine.

It belongs to the spermidine/spermine synthase family. As to quaternary structure, homodimer or homotetramer.

The protein localises to the cytoplasm. It carries out the reaction S-adenosyl 3-(methylsulfanyl)propylamine + putrescine = S-methyl-5'-thioadenosine + spermidine + H(+). Its pathway is amine and polyamine biosynthesis; spermidine biosynthesis; spermidine from putrescine: step 1/1. In terms of biological role, catalyzes the irreversible transfer of a propylamine group from the amino donor S-adenosylmethioninamine (decarboxy-AdoMet) to putrescine (1,4-diaminobutane) to yield spermidine. The sequence is that of Polyamine aminopropyltransferase from Escherichia coli O17:K52:H18 (strain UMN026 / ExPEC).